A 546-amino-acid chain; its full sequence is Chaperonin GroEL (546 aa).

ATP is bound by residues 30 to 33 (TLGP), lysine 51, 87 to 91 (DGTTT), glycine 415, and aspartate 496. The tract at residues 527-546 (EKKAPAGAPGGMGGMGDMDF) is disordered. Positions 534–546 (APGGMGGMGDMDF) are enriched in gly residues.

This sequence belongs to the chaperonin (HSP60) family. Forms a cylinder of 14 subunits composed of two heptameric rings stacked back-to-back. Interacts with the co-chaperonin GroES.

Its subcellular location is the cytoplasm. It catalyses the reaction ATP + H2O + a folded polypeptide = ADP + phosphate + an unfolded polypeptide.. Its function is as follows. Together with its co-chaperonin GroES, plays an essential role in assisting protein folding. The GroEL-GroES system forms a nano-cage that allows encapsulation of the non-native substrate proteins and provides a physical environment optimized to promote and accelerate protein folding. This chain is Chaperonin GroEL, found in Rhodospirillum centenum (strain ATCC 51521 / SW).